A 182-amino-acid polypeptide reads, in one-letter code: Small ribosomal subunit protein uS9 (182 aa).

Belongs to the universal ribosomal protein uS9 family.

This is Small ribosomal subunit protein uS9 from Corynebacterium efficiens (strain DSM 44549 / YS-314 / AJ 12310 / JCM 11189 / NBRC 100395).